We begin with the raw amino-acid sequence, 170 residues long: Shikimate kinase (170 aa).

ATP is bound at residue 11 to 16 (LSGKST). Position 15 (Ser-15) interacts with Mg(2+). 3 residues coordinate substrate: Asp-33, Arg-57, and Gly-79. An ATP-binding site is contributed by Arg-119. Arg-137 is a binding site for substrate.

This sequence belongs to the shikimate kinase family. Monomer. Mg(2+) is required as a cofactor.

It localises to the cytoplasm. It catalyses the reaction shikimate + ATP = 3-phosphoshikimate + ADP + H(+). It participates in metabolic intermediate biosynthesis; chorismate biosynthesis; chorismate from D-erythrose 4-phosphate and phosphoenolpyruvate: step 5/7. Functionally, catalyzes the specific phosphorylation of the 3-hydroxyl group of shikimic acid using ATP as a cosubstrate. The protein is Shikimate kinase of Clostridium botulinum (strain Kyoto / Type A2).